The chain runs to 366 residues: Aminomethyltransferase (366 aa).

Belongs to the GcvT family. As to quaternary structure, the glycine cleavage system is composed of four proteins: P, T, L and H.

The catalysed reaction is N(6)-[(R)-S(8)-aminomethyldihydrolipoyl]-L-lysyl-[protein] + (6S)-5,6,7,8-tetrahydrofolate = N(6)-[(R)-dihydrolipoyl]-L-lysyl-[protein] + (6R)-5,10-methylene-5,6,7,8-tetrahydrofolate + NH4(+). In terms of biological role, the glycine cleavage system catalyzes the degradation of glycine. The protein is Aminomethyltransferase of Bacillus velezensis (strain DSM 23117 / BGSC 10A6 / LMG 26770 / FZB42) (Bacillus amyloliquefaciens subsp. plantarum).